The sequence spans 114 residues: Ribosome-binding factor A (114 aa).

The protein belongs to the RbfA family. Monomer. Binds 30S ribosomal subunits, but not 50S ribosomal subunits or 70S ribosomes.

It is found in the cytoplasm. Its function is as follows. One of several proteins that assist in the late maturation steps of the functional core of the 30S ribosomal subunit. Associates with free 30S ribosomal subunits (but not with 30S subunits that are part of 70S ribosomes or polysomes). Required for efficient processing of 16S rRNA. May interact with the 5'-terminal helix region of 16S rRNA. The protein is Ribosome-binding factor A of Listeria innocua serovar 6a (strain ATCC BAA-680 / CLIP 11262).